The primary structure comprises 250 residues: MEKLEKLYEGKAKQLYATDDPEVLWVEYKNTATAGDGEKKEDFTGKGRLNNLITTIIFDLLKKRGIDSHLIKRVNDTGQLVRKVNMFPLEIVLRNVAAGHFCSRLGVEEGLPLKEPVLEYFLKNDDLHDPFVNDDDLVALDVCTREDLAEIAPLARKINEALIEIFAKIDVKLVDFKIEMGRATDGTLLLADEITPDSCRLWDQKDHSGKVEHLDKDLFRRGLGSIIPAYEEIEERLAELAKSEGIEVAE.

It belongs to the SAICAR synthetase family.

It catalyses the reaction 5-amino-1-(5-phospho-D-ribosyl)imidazole-4-carboxylate + L-aspartate + ATP = (2S)-2-[5-amino-1-(5-phospho-beta-D-ribosyl)imidazole-4-carboxamido]succinate + ADP + phosphate + 2 H(+). It functions in the pathway purine metabolism; IMP biosynthesis via de novo pathway; 5-amino-1-(5-phospho-D-ribosyl)imidazole-4-carboxamide from 5-amino-1-(5-phospho-D-ribosyl)imidazole-4-carboxylate: step 1/2. The sequence is that of Phosphoribosylaminoimidazole-succinocarboxamide synthase from Bifidobacterium longum subsp. infantis (strain ATCC 15697 / DSM 20088 / JCM 1222 / NCTC 11817 / S12).